We begin with the raw amino-acid sequence, 119 residues long: Methylglyoxal synthase (119 aa).

An MGS-like domain is found at Met-1–Phe-119. Residues His-8, Lys-12, Thr-34 to Thr-37, and Ser-54 to Gly-55 each bind substrate. Asp-60 (proton donor/acceptor) is an active-site residue. His-87 is a substrate binding site.

It belongs to the methylglyoxal synthase family.

It carries out the reaction dihydroxyacetone phosphate = methylglyoxal + phosphate. Its function is as follows. Catalyzes the formation of methylglyoxal from dihydroxyacetone phosphate. The chain is Methylglyoxal synthase from Clostridium beijerinckii (strain ATCC 51743 / NCIMB 8052) (Clostridium acetobutylicum).